An 834-amino-acid chain; its full sequence is Enhancer of filamentation 1 (834 aa).

An SH3 domain is found at 3-65 (ARNLMARALY…PGNRVKLLIG (63 aa)). Phosphotyrosine occurs at positions 92, 164, 166, 177, 189, 214, and 223. Ser-296 is subject to Phosphoserine. The residue at position 317 (Tyr-317) is a Phosphotyrosine. Disordered regions lie at residues 328–402 (PPAE…DKRL) and 584–624 (SQMP…SERS). Residues 332–344 (TSEKANPEERDGV) are compositionally biased toward basic and acidic residues. The Caspase cleavage related site signature appears at 360-363 (DVVD). Over residues 368–397 (LSFSSTGSTRSNMSTSSTTSKESSVSASPS) the composition is skewed to low complexity. At Ser-369 the chain carries Phosphoserine. Residues 710 to 760 (FYYDQCETHYISLLNAIDALFSCVSSAQPPRIFVAHSKFVILSAHKLVFIG) form a divergent helix-loop-helix motif region. Positions 710 to 834 (FYYDQCETHY…KRSLLEMATF (125 aa)) are required for interaction with PLK1. The residue at position 780 (Ser-780) is a Phosphoserine. Thr-804 is modified (phosphothreonine).

This sequence belongs to the CAS family. In terms of assembly, homodimer. Forms heterodimers with BCAR1/p130cas. Forms complexes with PTK2B/RAFTK, adapter protein CRKL and LYN kinase. Part of a complex composed of NEDD9, AURKA and CTTN; within the complex NEDD9 acts as a scaffold protein and is required for complex formation. Part of a ternary complex composed of SMAD3, ITCH/AIP4 and NEDD9/HEF1; within the complex NEDD9/HEF1 interacts (via N-terminus) with ITCH/AIP4; the complex mediates ubiquitination and proteasomal degradation of NEDD9/HEF1. Interacts with ID2. Interacts with CTTN (via N-terminus). Interacts with MICAL. Interacts with TXNL4/DIM1. Interacts with BCAR3 (via Ras-GEF domain). Interacts with SH2D3C isoform 1 and isoform 2. Interacts with BCAR3. Interacts with ECT2. Interacts with PTPN11/SHP-2 (via SH2 domains); the interaction is enhanced when NEDD9/CAS-L is tyrosine phosphorylated. Interacts (via C-terminus) with PLK1 (via polo box domain). Interacts with NKX2-5. Interacts with SMAD3; the interaction is inhibited by oxidation of NEDD9. Interacts with ABL1; interaction is induced by CXCL12-mediated phosphorylation of NEDD/HEF1. Interacts (via SH3 domain) with PTK2/FAK. Interacts with FYN; in the presence of PTK2. Interacts with INPPL1/SHIP2. Polyubiquitinated by ITCH/AIP4, leading to proteasomal degradation. In terms of processing, PTK2/FAK1 phosphorylates the protein at the YDYVHL motif (conserved among all cas proteins) following integrin stimulation. The SRC family kinases (FYN, SRC, LCK and CRK) are recruited to the phosphorylated sites and can phosphorylate other tyrosine residues. Ligation of either integrin beta-1 or B-cell antigen receptor on tonsillar B-cells and B-cell lines promotes tyrosine phosphorylation and both integrin and BCR-mediated tyrosine phosphorylation requires an intact actin network. Phosphorylation is required to recruit NEDD9 to T-cell receptor microclusters at the periphery of newly formed immunological synapses. In fibroblasts transformation with oncogene v-ABL results in an increase in tyrosine phosphorylation. Transiently phosphorylated following CD3 cross-linking and this phosphorylated form binds to CRKL and C3G. A mutant lacking the SH3 domain is phosphorylated upon CD3 cross-linking but not upon integrin beta-1 cross-linking. Tyrosine phosphorylation occurs upon stimulation of the G-protein coupled C1a calcitonin receptor. Calcitonin-stimulated tyrosine phosphorylation is mediated by calcium- and protein kinase C-dependent mechanisms and requires the integrity of the actin cytoskeleton. Phosphorylation at Ser-369 induces proteasomal degradation. Phosphorylated by LYN. Phosphorylation at Ser-780 by CSNK1D or CSNK1E, or phosphorylation of Thr-804 by CSNK1E enhances the interaction of NEDD9 with PLK1.

It is found in the cytoplasm. It localises to the cell cortex. Its subcellular location is the nucleus. The protein resides in the golgi apparatus. The protein localises to the cell projection. It is found in the lamellipodium. It localises to the cell junction. Its subcellular location is the focal adhesion. The protein resides in the cytoskeleton. The protein localises to the spindle pole. It is found in the cilium. It localises to the cilium basal body. Its subcellular location is the basolateral cell membrane. Its function is as follows. Negatively regulates embryonic fibroblast migration. May play an important role in integrin beta-1 or B cell antigen receptor (BCR) mediated signaling in B- and T-cells. Integrin beta-1 stimulation leads to recruitment of various proteins including CRKl and SHPTP2 to the tyrosine phosphorylated form. Promotes adhesion and migration of lymphocytes; as a result required for the correct migration of lymphocytes to the spleen and other secondary lymphoid organs. Plays a role in the organization of T-cell F-actin cortical cytoskeleton and the centralization of T-cell receptor microclusters at the immunological synapse. Negatively regulates cilia outgrowth in polarized cysts. Modulates cilia disassembly via activation of AURKA-mediated phosphorylation of HDAC6 and subsequent deacetylation of alpha-tubulin. In conjunction with NKX2-5, positively regulates transcription of genes such as COL3A1 and MMP2, resulting in increased pulmonary endothelial fibrosis in response to hypoxia. Positively regulates RANKL-induced osteoclastogenesis. Required for the maintenance of hippocampal dendritic spines in the dentate gyrus and CA1 regions, thereby involved in spatial learning and memory. This is Enhancer of filamentation 1 from Canis lupus familiaris (Dog).